Consider the following 686-residue polypeptide: Translation initiation factor IF-2 (686 aa).

The disordered stretch occupies residues 35–99 (MSTVEDETAE…EHGQKDTDRR (65 aa)). Residues 50–68 (LQEEDKPEEKISKKEPDKK) are compositionally biased toward basic and acidic residues. A compositionally biased stretch (basic residues) spans 69 to 79 (DRKKTKGKKQM). Positions 87–99 (EGTEHGQKDTDRR) are enriched in basic and acidic residues. Residues 186–355 (LRPPIVTVMG…LLVAEMEELK (170 aa)) enclose the tr-type G domain. The segment at 195-202 (GHVDHGKT) is G1. 195–202 (GHVDHGKT) is a GTP binding site. Residues 220–224 (GITQH) form a G2 region. Residues 241–244 (DTPG) are G3. GTP is bound by residues 241 to 245 (DTPGH) and 295 to 298 (NKVD). The G4 stretch occupies residues 295-298 (NKVD). The G5 stretch occupies residues 331 to 333 (SAL).

Belongs to the TRAFAC class translation factor GTPase superfamily. Classic translation factor GTPase family. IF-2 subfamily.

Its subcellular location is the cytoplasm. One of the essential components for the initiation of protein synthesis. Protects formylmethionyl-tRNA from spontaneous hydrolysis and promotes its binding to the 30S ribosomal subunits. Also involved in the hydrolysis of GTP during the formation of the 70S ribosomal complex. This is Translation initiation factor IF-2 from Halothermothrix orenii (strain H 168 / OCM 544 / DSM 9562).